We begin with the raw amino-acid sequence, 143 residues long: MTRTVIAQGTFDILHPGHVHYLEEAAAMGDELLVIVARKSNVDHKEKPICPAAQRRDVVAALEAVDDAIVGHEEDIFAPIEAIDPDVIALGHDQHHDDDAIEAELERRGIDCTVERASAREPEREDEILSTRLIIDRILERRG.

Residues 10–11 (TF), 15–18 (HPGH), and aspartate 93 each bind ATP.

Belongs to the archaeal FAD synthase family. As to quaternary structure, homodimer. It depends on a divalent metal cation as a cofactor.

It catalyses the reaction FMN + ATP + H(+) = FAD + diphosphate. Its pathway is cofactor biosynthesis; FAD biosynthesis; FAD from FMN: step 1/1. Catalyzes the transfer of the AMP portion of ATP to flavin mononucleotide (FMN) to produce flavin adenine dinucleotide (FAD) coenzyme. The polypeptide is FAD synthase (Haloterrigena turkmenica (strain ATCC 51198 / DSM 5511 / JCM 9101 / NCIMB 13204 / VKM B-1734 / 4k) (Halococcus turkmenicus)).